We begin with the raw amino-acid sequence, 367 residues long: Glutamate 5-kinase (367 aa).

Residue lysine 9 coordinates ATP. The substrate site is built by serine 49, aspartate 136, and asparagine 148. ATP is bound by residues 168–169 (TD) and 210–216 (TGGMKSK). The region spanning 276 to 350 (SGQIEIDAGA…GMQSQHIQAR (75 aa)) is the PUA domain.

It belongs to the glutamate 5-kinase family.

The protein resides in the cytoplasm. The catalysed reaction is L-glutamate + ATP = L-glutamyl 5-phosphate + ADP. It participates in amino-acid biosynthesis; L-proline biosynthesis; L-glutamate 5-semialdehyde from L-glutamate: step 1/2. In terms of biological role, catalyzes the transfer of a phosphate group to glutamate to form L-glutamate 5-phosphate. The chain is Glutamate 5-kinase from Bacillus cereus (strain ZK / E33L).